The chain runs to 193 residues: uncharacterized protein (193 aa).

The signal sequence occupies residues 1–14; it reads MSTSLLFSLSPSSS.

This is an uncharacterized protein from Saccharomyces cerevisiae (strain ATCC 204508 / S288c) (Baker's yeast).